A 142-amino-acid chain; its full sequence is MSISSHDVGRTYPTTDPYLVTAEKIRELATALGDNAPAYRGDDPIAPPTFAMVLASRAWEALFDDEQLDLRLEHMIHTDQSFHWIRPLHEGDEVTAALTITSVRTRGNTDIIGINVSLDHVDGEHLGNATSTLWHTRPEGNA.

This sequence belongs to the UPF0336 family.

The polypeptide is UPF0336 protein PPA1896 (Cutibacterium acnes (strain DSM 16379 / KPA171202) (Propionibacterium acnes)).